Here is a 176-residue protein sequence, read N- to C-terminus: ATP-dependent protease subunit HslV (176 aa).

Residue Thr-2 is part of the active site. The Na(+) site is built by Gly-157, Cys-160, and Thr-163.

It belongs to the peptidase T1B family. HslV subfamily. A double ring-shaped homohexamer of HslV is capped on each side by a ring-shaped HslU homohexamer. The assembly of the HslU/HslV complex is dependent on binding of ATP.

The protein resides in the cytoplasm. It catalyses the reaction ATP-dependent cleavage of peptide bonds with broad specificity.. Its activity is regulated as follows. Allosterically activated by HslU binding. Functionally, protease subunit of a proteasome-like degradation complex believed to be a general protein degrading machinery. In Pseudomonas fluorescens (strain ATCC BAA-477 / NRRL B-23932 / Pf-5), this protein is ATP-dependent protease subunit HslV.